The following is a 485-amino-acid chain: Glutamate--tRNA ligase (485 aa).

Residues 12–22 (PSPTGEPHVGT) carry the 'HIGH' region motif. The Zn(2+) site is built by cysteine 109, cysteine 111, cysteine 136, and histidine 138. A 'KMSKS' region motif is present at residues 253 to 257 (KLSKR). Lysine 256 lines the ATP pocket.

This sequence belongs to the class-I aminoacyl-tRNA synthetase family. Glutamate--tRNA ligase type 1 subfamily. Monomer. Zn(2+) is required as a cofactor.

It localises to the cytoplasm. It carries out the reaction tRNA(Glu) + L-glutamate + ATP = L-glutamyl-tRNA(Glu) + AMP + diphosphate. Catalyzes the attachment of glutamate to tRNA(Glu) in a two-step reaction: glutamate is first activated by ATP to form Glu-AMP and then transferred to the acceptor end of tRNA(Glu). The chain is Glutamate--tRNA ligase from Agrobacterium fabrum (strain C58 / ATCC 33970) (Agrobacterium tumefaciens (strain C58)).